Here is a 46-residue protein sequence, read N- to C-terminus: uncharacterized protein (46 aa).

The chain crosses the membrane as a helical span at residues His12–Leu34.

Its subcellular location is the cell membrane. This is an uncharacterized protein from Bacillus subtilis (strain 168).